The sequence spans 193 residues: Ribonuclease HII (193 aa).

Residues 15–193 (CIVAGIDEAG…PYHRRSFRCC (179 aa)) form the RNase H type-2 domain. A divalent metal cation contacts are provided by aspartate 21, glutamate 22, and aspartate 112.

This sequence belongs to the RNase HII family. Mn(2+) serves as cofactor. It depends on Mg(2+) as a cofactor.

The protein resides in the cytoplasm. The enzyme catalyses Endonucleolytic cleavage to 5'-phosphomonoester.. In terms of biological role, endonuclease that specifically degrades the RNA of RNA-DNA hybrids. This chain is Ribonuclease HII, found in Rickettsia africae (strain ESF-5).